Consider the following 251-residue polypeptide: uncharacterized protein (251 aa).

4 disordered regions span residues 1-93 (MQPG…ASPG), 107-152 (GLRS…SRPQ), 169-188 (PSSI…VSLS), and 224-251 (LQAQ…STPS). Residues 225 to 234 (QAQNLPSSGP) are compositionally biased toward polar residues.

This is an uncharacterized protein from Homo sapiens (Human).